A 239-amino-acid chain; its full sequence is Purine nucleoside phosphorylase DeoD-type 1 (239 aa).

Residue histidine 5 coordinates a purine D-ribonucleoside. Residues glycine 21, arginine 25, arginine 44, and 88 to 91 (RVGS) contribute to the phosphate site. A purine D-ribonucleoside contacts are provided by residues 180-182 (EME) and 204-205 (SD). Catalysis depends on aspartate 205, which acts as the Proton donor.

This sequence belongs to the PNP/UDP phosphorylase family. As to quaternary structure, homohexamer; trimer of homodimers.

The enzyme catalyses a purine D-ribonucleoside + phosphate = a purine nucleobase + alpha-D-ribose 1-phosphate. The catalysed reaction is a purine 2'-deoxy-D-ribonucleoside + phosphate = a purine nucleobase + 2-deoxy-alpha-D-ribose 1-phosphate. In terms of biological role, catalyzes the reversible phosphorolytic breakdown of the N-glycosidic bond in the beta-(deoxy)ribonucleoside molecules, with the formation of the corresponding free purine bases and pentose-1-phosphate. This Vibrio parahaemolyticus serotype O3:K6 (strain RIMD 2210633) protein is Purine nucleoside phosphorylase DeoD-type 1.